We begin with the raw amino-acid sequence, 138 residues long: Large ribosomal subunit protein uL16 (138 aa).

Residues 1 to 17 show a composition bias toward basic residues; it reads MLIPRKVKHRKQHHPRQ. Residues 1–22 are disordered; that stretch reads MLIPRKVKHRKQHHPRQRGIAS.

The protein belongs to the universal ribosomal protein uL16 family. In terms of assembly, part of the 50S ribosomal subunit.

In terms of biological role, binds 23S rRNA and is also seen to make contacts with the A and possibly P site tRNAs. The polypeptide is Large ribosomal subunit protein uL16 (Mycobacterium leprae (strain Br4923)).